The sequence spans 297 residues: Large ribosomal subunit protein uL18 (297 aa).

At Gly2 the chain carries N-acetylglycine. N6-acetyllysine is present on residues Lys5 and Lys48. Phosphoserine is present on Ser185. Lys220 is subject to N6-acetyllysine; alternate. Lys220 is covalently cross-linked (Glycyl lysine isopeptide (Lys-Gly) (interchain with G-Cter in SUMO1); alternate). Lys220 is covalently cross-linked (Glycyl lysine isopeptide (Lys-Gly) (interchain with G-Cter in SUMO2); alternate). Phosphothreonine is present on Thr232. Residues 253–297 (YEKKPKREVKKKRWNRPKMSLAQKKDRVAQKKASFLRAQERAAES) are disordered. A compositionally biased stretch (basic residues) spans 258–268 (KREVKKKRWNR). A Phosphoserine modification is found at Ser272.

Belongs to the universal ribosomal protein uL18 family. Component of the large ribosomal subunit (LSU). Part of the 5S RNP complex, which is a LSU subcomplex composed of the 5S RNA, RPL5 and RPL11. Component of a hexameric 5S RNP precursor complex, composed of 5S RNA, RRS1, RPF2/BXDC1, RPL5, RPL11 and HEATR3; this complex acts as a precursor for ribosome assembly. Interacts with NVL in an ATP-dependent manner. Interacts with RRP1B. Interacts with IPO5, IPO7 and KPNB1; these interactions may be involved in RPL5 nuclear import for the assembly of ribosomal subunits. Interacts with RRP1B.

Its subcellular location is the cytoplasm. The protein resides in the nucleus. It localises to the nucleolus. Its function is as follows. Component of the ribosome, a large ribonucleoprotein complex responsible for the synthesis of proteins in the cell. The small ribosomal subunit (SSU) binds messenger RNAs (mRNAs) and translates the encoded message by selecting cognate aminoacyl-transfer RNA (tRNA) molecules. The large subunit (LSU) contains the ribosomal catalytic site termed the peptidyl transferase center (PTC), which catalyzes the formation of peptide bonds, thereby polymerizing the amino acids delivered by tRNAs into a polypeptide chain. The nascent polypeptides leave the ribosome through a tunnel in the LSU and interact with protein factors that function in enzymatic processing, targeting, and the membrane insertion of nascent chains at the exit of the ribosomal tunnel. As part of the 5S RNP/5S ribonucleoprotein particle it is an essential component of the LSU, required for its formation and the maturation of rRNAs. It also couples ribosome biogenesis to p53/TP53 activation. As part of the 5S RNP it accumulates in the nucleoplasm and inhibits MDM2, when ribosome biogenesis is perturbed, mediating the stabilization and the activation of TP53. The protein is Large ribosomal subunit protein uL18 (Rpl5) of Rattus norvegicus (Rat).